The following is an 83-amino-acid chain: Toxin To15 (83 aa).

The signal sequence occupies residues 1 to 19; it reads MKGIILLISCLMLIEVVVG. One can recognise an LCN-type CS-alpha/beta domain in the interval 21–82; the sequence is KEGYPLDSSG…IWNAKTNKCY (62 aa). Disulfide bonds link cysteine 31/cysteine 81, cysteine 35/cysteine 57, cysteine 43/cysteine 62, and cysteine 47/cysteine 64.

The protein belongs to the long (4 C-C) scorpion toxin superfamily. Sodium channel inhibitor family. Beta subfamily. Expressed by the venom gland.

It is found in the secreted. Its function is as follows. Beta toxins bind voltage-independently at site-4 of sodium channels (Nav) and shift the voltage of activation toward more negative potentials thereby affecting sodium channel activation and promoting spontaneous and repetitive firing. In Tityus obscurus (Amazonian scorpion), this protein is Toxin To15.